The primary structure comprises 331 residues: MELSRGASAPDPDDVRPLKPCLLRRNHSRDQHGVAASSLEELRSKACELLAIDKSLTPITLVLAEDGTIVDDDDYFLCLPSNTKFVALACNEKWIYNDSDGGTAWVSQESFEADEPDSRAGVKWKNVARQLKEDLSSIILLSEEDLQALIDIPCAELAQELCQSCATVQGLQSTLQQVLDQREEARQSKQLLELYLQALEKEGNILSNQKESKAALSEELDAVDTGVGREMASEVLLRSQILTTLKEKPAPELSLSSQDLESVSKEDPKALAVALSWDIRKAETVQQACTTELALRLQQVQSLHSLRNLSARRSPLPGEPQRPKRAKRDSS.

Methionine 1 carries the post-translational modification N-acetylmethionine. A CIDE-N domain is found at 17-96 (PLKPCLLRRN…ALACNEKWIY (80 aa)). The residue at position 243 (threonine 243) is a Phosphothreonine. Positions 306 to 331 (LRNLSARRSPLPGEPQRPKRAKRDSS) are disordered.

In terms of assembly, heterodimer of DFFA and DFFB. Post-translationally, caspase-3 cleaves DFF45 at 2 sites to generate an active factor.

The protein resides in the cytoplasm. In terms of biological role, inhibitor of the caspase-activated DNase (DFF40). The polypeptide is DNA fragmentation factor subunit alpha (Dffa) (Mus musculus (Mouse)).